Here is a 300-residue protein sequence, read N- to C-terminus: Ribonuclease HIII (300 aa).

The region spanning 86–300 is the RNase H type-2 domain; sequence RSRIGVDESG…FNEVLGSGNQ (215 aa). Positions 92, 93, and 196 each coordinate a divalent metal cation.

This sequence belongs to the RNase HII family. RnhC subfamily. Mn(2+) is required as a cofactor. The cofactor is Mg(2+).

It localises to the cytoplasm. The catalysed reaction is Endonucleolytic cleavage to 5'-phosphomonoester.. Functionally, endonuclease that specifically degrades the RNA of RNA-DNA hybrids. This chain is Ribonuclease HIII, found in Chlamydia trachomatis serovar A (strain ATCC VR-571B / DSM 19440 / HAR-13).